We begin with the raw amino-acid sequence, 168 residues long: NADH-quinone oxidoreductase subunit B (168 aa).

[4Fe-4S] cluster is bound by residues Cys37, Cys38, Cys103, and Cys132.

It belongs to the complex I 20 kDa subunit family. In terms of assembly, NDH-1 is composed of 14 different subunits. Subunits NuoB, C, D, E, F, and G constitute the peripheral sector of the complex. The cofactor is [4Fe-4S] cluster.

The protein resides in the cell inner membrane. It catalyses the reaction a quinone + NADH + 5 H(+)(in) = a quinol + NAD(+) + 4 H(+)(out). NDH-1 shuttles electrons from NADH, via FMN and iron-sulfur (Fe-S) centers, to quinones in the respiratory chain. The immediate electron acceptor for the enzyme in this species is believed to be ubiquinone. Couples the redox reaction to proton translocation (for every two electrons transferred, four hydrogen ions are translocated across the cytoplasmic membrane), and thus conserves the redox energy in a proton gradient. The chain is NADH-quinone oxidoreductase subunit B from Campylobacter fetus subsp. fetus (strain 82-40).